A 751-amino-acid chain; its full sequence is ATP-dependent DNA helicase Hel308 (751 aa).

ATP is bound by residues Q20 and 39–46 (IPTASGKT). Residues 26–196 (EGLLDKSKNF…WLNAKLVTDE (171 aa)) form the Helicase ATP-binding domain. A DEAH box motif is present at residues 143 to 146 (DEIH). The region spanning 235 to 435 (NLTDLIVDSV…VLRVHILGLI (201 aa)) is the Helicase C-terminal domain.

The protein belongs to the helicase family. Hel308 subfamily. As to quaternary structure, monomer.

It catalyses the reaction Couples ATP hydrolysis with the unwinding of duplex DNA by translocating in the 3'-5' direction.. The enzyme catalyses ATP + H2O = ADP + phosphate + H(+). DNA-dependent ATPase and 3'-5' DNA helicase that may be involved in repair of stalled replication forks. In Methanococcus vannielii (strain ATCC 35089 / DSM 1224 / JCM 13029 / OCM 148 / SB), this protein is ATP-dependent DNA helicase Hel308.